Here is a 198-residue protein sequence, read N- to C-terminus: Holliday junction resolvase RecU (198 aa).

Residues 1–21 (MVNYPHKLSSQKRQPSLSQPK) form a disordered region. Positions 11 to 21 (QKRQPSLSQPK) are enriched in polar residues. 4 residues coordinate Mg(2+): Thr-81, Asp-83, Glu-96, and Gln-115.

This sequence belongs to the RecU family. The cofactor is Mg(2+).

It is found in the cytoplasm. It catalyses the reaction Endonucleolytic cleavage at a junction such as a reciprocal single-stranded crossover between two homologous DNA duplexes (Holliday junction).. In terms of biological role, endonuclease that resolves Holliday junction intermediates in genetic recombination. Cleaves mobile four-strand junctions by introducing symmetrical nicks in paired strands. Promotes annealing of linear ssDNA with homologous dsDNA. Required for DNA repair, homologous recombination and chromosome segregation. This is Holliday junction resolvase RecU from Streptococcus pneumoniae (strain ATCC 700669 / Spain 23F-1).